Consider the following 399-residue polypeptide: uncharacterized protein (399 aa).

The protein belongs to the TelA family.

This is an uncharacterized protein from Listeria monocytogenes serovar 1/2a (strain ATCC BAA-679 / EGD-e).